The chain runs to 748 residues: Tyrosine--tRNA ligase 2, cytoplasmic (748 aa).

An N-acetylmethionine modification is found at Met-1. A 'HIGH' region motif is present at residues 441 to 449; that stretch reads PSGRMHIAQ. Residues Tyr-564, Gln-568, Asp-571, and Gln-586 each coordinate L-tyrosine. The 'KMSKS' region motif lies at 623 to 627; it reads KMSKS. Lys-626 contributes to the ATP binding site.

It belongs to the class-I aminoacyl-tRNA synthetase family.

The protein resides in the cytoplasm. Its subcellular location is the cytosol. It carries out the reaction tRNA(Tyr) + L-tyrosine + ATP = L-tyrosyl-tRNA(Tyr) + AMP + diphosphate + H(+). Catalyzes the attachment of tyrosine to tRNA(Tyr) in a two-step reaction: tyrosine is first activated by ATP to form Tyr-AMP and then transferred to the acceptor end of tRNA(Tyr). This chain is Tyrosine--tRNA ligase 2, cytoplasmic, found in Arabidopsis thaliana (Mouse-ear cress).